The following is a 650-amino-acid chain: Putative polypeptide N-acetylgalactosaminyltransferase 9 (650 aa).

The Cytoplasmic portion of the chain corresponds to 1–11 (MAFIWRRRSTT). Residues 12-31 (IVKLVAFALAIWFCIAFLVY) form a helical; Signal-anchor for type II membrane protein membrane-spanning segment. The Lumenal segment spans residues 32-650 (TDDTRRRAAQ…TLENYDSSKL (619 aa)). A disordered region spans residues 84–154 (NVIGGGGQKQ…NPGELGKPVR (71 aa)). The span at 107 to 136 (HKADLQAERMRKKAAEQPKKKPQEDSKKVI) shows a compositional bias: basic and acidic residues. Disulfide bonds link Cys-198–Cys-432, Cys-423–Cys-499, Cys-535–Cys-554, Cys-577–Cys-590, and Cys-616–Cys-631. The tract at residues 208–317 (LPKTDVIICF…EGWLEPLLDR (110 aa)) is catalytic subdomain A. Residues Cys-216, Asp-249, and Arg-278 each coordinate substrate. A Mn(2+)-binding site is contributed by Asp-301. Residues Ser-302 and His-303 each contribute to the substrate site. Residue His-303 coordinates Mn(2+). Asn-321 and Asn-373 each carry an N-linked (GlcNAc...) asparagine glycan. The interval 378–440 (PVYSPTMAGG…PCSHVGHIFR (63 aa)) is catalytic subdomain B. Mn(2+) is bound at residue His-437. Positions 440 and 445 each coordinate substrate. Residues 521–643 (AHGEIRNLGY…SLSRQQWTLE (123 aa)) form the Ricin B-type lectin domain.

It belongs to the glycosyltransferase 2 family. GalNAc-T subfamily. Isoform A forms homotetramer. Isoform B forms homodimer. Requires Mn(2+) as cofactor.

The protein resides in the golgi apparatus membrane. The catalysed reaction is L-seryl-[protein] + UDP-N-acetyl-alpha-D-galactosamine = a 3-O-[N-acetyl-alpha-D-galactosaminyl]-L-seryl-[protein] + UDP + H(+). It catalyses the reaction L-threonyl-[protein] + UDP-N-acetyl-alpha-D-galactosamine = a 3-O-[N-acetyl-alpha-D-galactosaminyl]-L-threonyl-[protein] + UDP + H(+). The protein operates within protein modification; protein glycosylation. In terms of biological role, catalyzes the initial reaction in O-linked oligosaccharide biosynthesis, the transfer of an N-acetyl-D-galactosamine residue to a serine or threonine residue on the protein receptor. It can both act as a peptide transferase that transfers GalNAc onto unmodified peptide substrates, and as a glycopeptide transferase that requires the prior addition of a GalNAc on a peptide before adding additional GalNAc moieties. Its function is as follows. N-acetylgalactosaminyltransferase which preferentially O-glycosylates negatively charge substrates. O-glycosylates mucin-like protein Sgs3 in the salivary gland but to a lesser extent than isoform B. By regulating the O-glycosylation of secretory cargo proteins plays a role in the morphology and maturation of salivary gland secretory granules. Functionally, N-acetylgalactosaminyltransferase which preferentially O-glycosylates positively charge substrates. O-glycosylates mucin-like protein Sgs3 in the salivary gland. By regulating the O-glycosylation of secretory cargo proteins, plays a role in the morphology and maturation of salivary gland secretory granules. The polypeptide is Putative polypeptide N-acetylgalactosaminyltransferase 9 (Drosophila melanogaster (Fruit fly)).